The sequence spans 437 residues: MSKALPLLTRQGERIAITHGLRTPFARQATAFHGIPALELGRMVVSELLARSEISPDVIEQLVFGQVVQMPEAPNIAREIVLASALSVHTDAWSVSRACATSFQAVANVAESLMIGHIQAGIAGGADSSSVLPIGVSKKLARLLVDASKTRSLAQKLKLFSGLRPRDLLPVAPAVAEYSTGLRMGDSAEQMAKNHGITREQQDALALRSHQRAAHAWQQGLLNDEVMTACVPPWEQPFEQDNNVRAESKMQDYARLRPAFDRRHGTVTAANSTPLTDGAAAVILMTASRARELGIAPLGFLRSYAFSAIDVRQDMLLGPSYASPLALDRAGITLADLSLIDMHEAFAAQTLANLKMFADERFAREVLDRPRALGEVDMERFNVLGGSIAYGHPFAATGARMITQTLNELRRRGGGLGLVTACAAGGLGAAMVLEVDS.

The active-site Acyl-thioester intermediate is Cys-99. Catalysis depends on proton acceptor residues His-392 and Cys-422.

Belongs to the thiolase-like superfamily. Thiolase family. In terms of assembly, heterotetramer of two alpha chains (FadJ) and two beta chains (FadI).

It is found in the cytoplasm. It catalyses the reaction an acyl-CoA + acetyl-CoA = a 3-oxoacyl-CoA + CoA. The protein operates within lipid metabolism; fatty acid beta-oxidation. Catalyzes the final step of fatty acid oxidation in which acetyl-CoA is released and the CoA ester of a fatty acid two carbons shorter is formed. This chain is 3-ketoacyl-CoA thiolase, found in Erwinia tasmaniensis (strain DSM 17950 / CFBP 7177 / CIP 109463 / NCPPB 4357 / Et1/99).